The following is a 128-amino-acid chain: uncharacterized protein (128 aa).

Helical transmembrane passes span Leu33 to Val53 and Phe61 to Tyr81. Positions Asp99–Phe120 are enriched in polar residues. The interval Asp99–Asp128 is disordered.

The protein localises to the membrane. This is an uncharacterized protein from Schizosaccharomyces pombe (strain 972 / ATCC 24843) (Fission yeast).